The primary structure comprises 97 residues: YcgL domain-containing protein CKO_01183 (97 aa).

One can recognise a YcgL domain in the interval 1-85 (MFCVIYRSSK…PPEDLLKQHL (85 aa)). Positions 74–97 (PPPPEDLLKQHLSAPGENKPDAKS) are disordered.

In Citrobacter koseri (strain ATCC BAA-895 / CDC 4225-83 / SGSC4696), this protein is YcgL domain-containing protein CKO_01183.